A 1650-amino-acid polypeptide reads, in one-letter code: Transmembrane domain-containing protein DDB_G0287209 (1650 aa).

A coiled-coil region spans residues 194–225; that stretch reads NNNNNNFNNNNNNNNNNNNNKNNYNNNKSNLI. Disordered stretches follow at residues 197-216 and 1218-1296; these read NNNFNNNNNNNNNNNNNKNN and ENQF…NINN. Residues 1224-1284 are compositionally biased toward low complexity; it reads NNNENSGSSG…SNSNENNYNG (61 aa). The next 9 helical transmembrane spans lie at 1314-1334, 1347-1369, 1390-1410, 1454-1474, 1489-1509, 1515-1535, 1539-1559, 1570-1590, and 1595-1615; these read PLLLIPFIFWILFFGLFLSLF, ILFLQLNSIVFYPLPNIYGLQLF, ISISLISIFLIYLIGISDVTS, WNIYLMLIQPLFHCLISLIVP, ILFISTPIQIVFFFSSIVILF, WWDLIFVFKTILFTSLSVTLL, PVYFSALVICQIVYSYSQFAF, VENLLNLFQLSILIVINTSII, and FNLIGILFTIVIFSCSLITII.

It is found in the membrane. The polypeptide is Transmembrane domain-containing protein DDB_G0287209 (Dictyostelium discoideum (Social amoeba)).